The chain runs to 322 residues: Light-dependent protochlorophyllide reductase (322 aa).

Belongs to the short-chain dehydrogenases/reductases (SDR) family. POR subfamily.

The enzyme catalyses chlorophyllide a + NADP(+) = protochlorophyllide a + NADPH + H(+). Its pathway is porphyrin-containing compound metabolism; chlorophyll biosynthesis. Phototransformation of protochlorophyllide (Pchlide) to chlorophyllide (Chlide). The chain is Light-dependent protochlorophyllide reductase (por) from Synechocystis sp. (strain ATCC 27184 / PCC 6803 / Kazusa).